The primary structure comprises 688 residues: Glycine--tRNA ligase beta subunit (688 aa).

Belongs to the class-II aminoacyl-tRNA synthetase family. Tetramer of two alpha and two beta subunits.

It localises to the cytoplasm. It catalyses the reaction tRNA(Gly) + glycine + ATP = glycyl-tRNA(Gly) + AMP + diphosphate. The protein is Glycine--tRNA ligase beta subunit of Shewanella sp. (strain ANA-3).